The sequence spans 634 residues: Probable potassium transport system protein Kup 1 (634 aa).

The next 12 helical transmembrane spans lie at 20 to 40, 64 to 84, 110 to 130, 148 to 168, 176 to 196, 224 to 244, 256 to 276, 290 to 310, 348 to 368, 377 to 397, 405 to 425, and 430 to 450; these read FLTL…TSPL, VMSL…VLLI, FAAI…DAII, PVFD…LFVV, VAAW…LGGI, AGLL…ALYA, FAWF…QGAM, FLFP…ATII, IYIP…VFAF, AYGI…YFVM, VATS…FLMA, and IFEG…VMIT.

It belongs to the HAK/KUP transporter (TC 2.A.72) family.

Its subcellular location is the cell inner membrane. It carries out the reaction K(+)(in) + H(+)(in) = K(+)(out) + H(+)(out). In terms of biological role, transport of potassium into the cell. Likely operates as a K(+):H(+) symporter. This is Probable potassium transport system protein Kup 1 from Rhodopseudomonas palustris (strain BisB5).